Reading from the N-terminus, the 175-residue chain is MADRKEQKRVNAEKRQENWVDRLVSVNRVSKVVKGGRRFSFNTVVVVGNEDGLVGTGLGKANEVSSAISKGADDAKKNVIRVPMRDGTIPHKVVGKQDAGKVLLKPASPGTGVIAGGGVRAVLECAGYRNVLTKSLGTSNPHNQVKATINALAETEDALEVARRRDIPLEKVFNG.

The region spanning 19 to 82 (WVDRLVSVNR…DDAKKNVIRV (64 aa)) is the S5 DRBM domain.

This sequence belongs to the universal ribosomal protein uS5 family. Part of the 30S ribosomal subunit. Contacts proteins S4 and S8.

Its function is as follows. With S4 and S12 plays an important role in translational accuracy. Functionally, located at the back of the 30S subunit body where it stabilizes the conformation of the head with respect to the body. This Salinibacter ruber (strain DSM 13855 / M31) protein is Small ribosomal subunit protein uS5.